The chain runs to 280 residues: 2-dehydro-3-deoxyphosphooctonate aldolase (280 aa).

Belongs to the KdsA family.

It is found in the cytoplasm. It carries out the reaction D-arabinose 5-phosphate + phosphoenolpyruvate + H2O = 3-deoxy-alpha-D-manno-2-octulosonate-8-phosphate + phosphate. The protein operates within carbohydrate biosynthesis; 3-deoxy-D-manno-octulosonate biosynthesis; 3-deoxy-D-manno-octulosonate from D-ribulose 5-phosphate: step 2/3. Its pathway is bacterial outer membrane biogenesis; lipopolysaccharide biosynthesis. This Rhizobium meliloti (strain 1021) (Ensifer meliloti) protein is 2-dehydro-3-deoxyphosphooctonate aldolase.